Consider the following 741-residue polypeptide: Protein ACCUMULATION AND REPLICATION OF CHLOROPLASTS 3, chloroplastic (741 aa).

The transit peptide at 1–41 (MPISMELPVFSTLRVPLFSRLALLPTFGVPFSSLGATTRLN) directs the protein to the chloroplast. 2 disordered regions span residues 444 to 465 (ENGD…SRLD) and 539 to 558 (DSRE…SSDT). Positions 451–465 (YPLKEGEPSRNSRLD) are enriched in basic and acidic residues. The segment covering 546-558 (FNPNGSTKDSSDT) has biased composition (polar residues). 3 MORN repeats span residues 612-628 (QGGL…GDGS), 630-652 (YDGM…NGDV), and 653-675 (FQGT…KGDR).

As to quaternary structure, self-interacts. Interacts with FTSZ, CDP1/PARC6 (via N-terminus), MIND1 and MINE1. Part of a complex made of ARC3, ARC6, FTSZ1 and FTSZ2. Recruited to the middle of the plastid by CDP1/PARC6 where subsequent complex made of CDP1/PARC6, ARC3 and FtsZ proteins can form; this complex enhances the dynamics of Z rings during chloroplast division. Binding to FTSZ2-1 is enabled by ARC6.

It is found in the plastid. It localises to the chloroplast outer membrane. Its subcellular location is the chloroplast stroma. Together with MIND1 and MCD1, regulates FtsZ ring positioning in chloroplasts in an ARC6-dependent manner. Z-ring accessory protein involved in the initiation of plastid division and division site placement (might functionally replace bacterial MinC). Acts as a disassembly factor that accelerates fragmentation and depolymerization of existing FtsZ2 filaments by enhancing FTSZ2 GTPase activity, thus leading to the conversion of FTSZ2 bound GTP into GDP, a process which triggers FtsZ2 filaments destabilization. Prevents misplaced Z-ring formation at chloroplast stroma nondivision sites. May control the rate of chloroplast expansion. Seems to influence stromule (stroma-filled tubular extensions of the plastid envelope membrane) length and frequency. This chain is Protein ACCUMULATION AND REPLICATION OF CHLOROPLASTS 3, chloroplastic, found in Arabidopsis thaliana (Mouse-ear cress).